A 470-amino-acid chain; its full sequence is 6-phospho-beta-glucosidase BglB (470 aa).

The active-site Proton donor is E172. The Nucleophile role is filled by E361.

This sequence belongs to the glycosyl hydrolase 1 family.

It carries out the reaction 6-phospho-beta-D-glucosyl-(1-&gt;4)-D-glucose + H2O = D-glucose 6-phosphate + D-glucose. Functionally, catalyzes the hydrolysis of phosphorylated beta-glucosides into glucose-6-phosphate (G-6-P) and aglycone. It has a high affinity for phosphorylated aromatic beta-glucosides (p-nitrophenyl-beta-glucoside, phenyl beta-glucoside, arbutin and phosphorylated salicin), and a low affinity for phosphorylated beta-methyl-glucoside. The sequence is that of 6-phospho-beta-glucosidase BglB (bglB) from Escherichia coli (strain K12).